We begin with the raw amino-acid sequence, 1173 residues long: 3-hydroxy-3-methylglutaryl coenzyme A reductase mlcD (1173 aa).

2 N-linked (GlcNAc...) asparagine glycosylation sites follow: asparagine 143 and asparagine 186. Positions 241–420 (DVVVMVLGYI…FTFYTAILSI (180 aa)) constitute an SSD domain. 7 helical membrane-spanning segments follow: residues 242–262 (VVVM…LFLS), 272–292 (LATS…DVAI), 302–322 (LLSE…SITL), 368–388 (NIVC…VLGI), 397–417 (VLAA…YTAI), 479–499 (FWMV…TLFQ), and 594–614 (VLSK…SYLF). Residues 498-673 (FQASSSGSLS…FTPTTTDSDS (176 aa)) form a linker region. The segment covering 647-666 (NQTPQIQSSLQAPQTRVFTP) has biased composition (polar residues). The segment at 647–669 (NQTPQIQSSLQAPQTRVFTPTTT) is disordered. The catalytic stretch occupies residues 674–1133 (DASLVLIKAS…LVKAHMAHNR (460 aa)). Glutamate 822 functions as the Charge relay system in the catalytic mechanism. Asparagine 886 carries an N-linked (GlcNAc...) asparagine glycan. Catalysis depends on lysine 956, which acts as the Charge relay system. A glycan (N-linked (GlcNAc...) asparagine) is linked at asparagine 997. Aspartate 1032 functions as the Charge relay system in the catalytic mechanism. Histidine 1128 functions as the Proton donor in the catalytic mechanism. Asparagine 1132 is a glycosylation site (N-linked (GlcNAc...) asparagine). The tract at residues 1132-1173 (NRSAPASSAPSRSVSPSGGTRTVPVPNNALRPSAAATDRARR) is disordered. The span at 1133–1148 (RSAPASSAPSRSVSPS) shows a compositional bias: low complexity.

The protein belongs to the HMG-CoA reductase family.

It is found in the endoplasmic reticulum membrane. It catalyses the reaction (R)-mevalonate + 2 NADP(+) + CoA = (3S)-3-hydroxy-3-methylglutaryl-CoA + 2 NADPH + 2 H(+). Its pathway is polyketide biosynthesis. In terms of biological role, HMG-CoA reductase; part of the gene cluster that mediates the biosynthesis of compactin, also known as mevastatin or ML-236B, and which acts as a potent competitive inhibitor of HMG-CoA reductase. Compactin biosynthesis is performed in two stages. The first stage is catalyzed by the nonaketide synthase mlcA, which belongs to type I polyketide synthases and catalyzes the iterative nine-step formation of the polyketide. This PKS stage is completed by the action of dehydrogenase mlcG, which catalyzes the NADPH-dependent reduction of the unsaturated tetra-, penta- and heptaketide intermediates that arise during the mlcA-mediated biosynthesis of the nonaketide chain and leads to dihydro-ML-236C carboxylate. Covalently bound dihydro-ML-236C carboxylate is released from mlcA by the mlcF esterase. Conversion of dihydro-ML-236C carboxylate into ML-236A carboxylate is subsequently performed with the participation of molecular oxygen and P450 monoogygenase mlcC. Finally, mlcH performs the conversion of ML-236A carboxylate to ML-236B/compactin carboxylate through the addition of the side-chain diketide moiety produced by the diketide synthase mlcB. HMG-CoA reductase mlcD may act as a down-regulator of compactin production and is involved in conferring resistance to ML-236B/compactin. This chain is 3-hydroxy-3-methylglutaryl coenzyme A reductase mlcD, found in Penicillium citrinum.